The primary structure comprises 417 residues: Transmembrane protease serine 11G (417 aa).

Residues 1 to 22 (MYQPGILGRRKRVCKPWTVALT) are Cytoplasmic-facing. A helical; Signal-anchor for type II membrane protein membrane pass occupies residues 23–43 (TTAALLALAVLIGLLVYFLVY). The Extracellular portion of the chain corresponds to 44 to 417 (EEKTHYYQAS…RNWIKSKTNI (374 aa)). An SEA domain is found at 46–165 (KTHYYQASFW…PYLREMNAAQ (120 aa)). The region spanning 186–416 (IADGKPAGSN…YRNWIKSKTN (231 aa)) is the Peptidase S1 domain. The cysteines at positions 211 and 227 are disulfide-linked. Catalysis depends on charge relay system residues His226 and Asp271. Intrachain disulfides connect Cys336-Cys352 and Cys363-Cys392. Ser367 (charge relay system) is an active-site residue.

Belongs to the peptidase S1 family. Highest expression in lung and tongue. Also expressed in brain, colon, heart and liver. Isoform 1 is the predominant form in tongue whereas both isoforms are expressed in similar amounts in lung. At the cellular level, expression is confined to epithelial cells within the cleft of the circumvallate papillae extending into the ducts of the minor salivary glands, the respiratory epithelium of the nasal cavity and tear gland ducts.

It is found in the membrane. This is Transmembrane protease serine 11G (Tmprss11g) from Rattus norvegicus (Rat).